Consider the following 115-residue polypeptide: NADH-ubiquinone oxidoreductase chain 3 (115 aa).

3 helical membrane passes run 4–24 (LTAL…AFWL), 55–75 (FFLV…LLPL), and 83–103 (YINI…LGLA).

It belongs to the complex I subunit 3 family. As to quaternary structure, core subunit of respiratory chain NADH dehydrogenase (Complex I) which is composed of 45 different subunits. Interacts with TMEM186. Interacts with TMEM242.

The protein localises to the mitochondrion inner membrane. The catalysed reaction is a ubiquinone + NADH + 5 H(+)(in) = a ubiquinol + NAD(+) + 4 H(+)(out). In terms of biological role, core subunit of the mitochondrial membrane respiratory chain NADH dehydrogenase (Complex I) which catalyzes electron transfer from NADH through the respiratory chain, using ubiquinone as an electron acceptor. Essential for the catalytic activity of complex I. The protein is NADH-ubiquinone oxidoreductase chain 3 of Peromyscus polionotus (Oldfield mouse).